Consider the following 365-residue polypeptide: UBX domain-containing protein 2B (365 aa).

The disordered stretch occupies residues 1 to 97 (MADGGASPAQ…MSDDKENQRF (97 aa)). Composition is skewed to basic and acidic residues over residues 50 to 63 (DEAKRQSLRSDKPT) and 73 to 95 (LKIDSFRSLRKPERSMSDDKENQ). The SEP domain maps to 175–240 (DVQILLKLWR…MEDHQEQEYV (66 aa)). Residues 286–363 (DSVPATKIQI…DILNTVILQQ (78 aa)) enclose the UBX domain.

The protein belongs to the NSFL1C family.

The protein resides in the nucleus. It localises to the cytoplasm. It is found in the cytosol. Its subcellular location is the endoplasmic reticulum. The protein localises to the golgi apparatus. The protein resides in the cytoskeleton. It localises to the microtubule organizing center. It is found in the centrosome. Adapter protein required for Golgi and endoplasmic reticulum biogenesis. Involved in Golgi and endoplasmic reticulum maintenance during interphase and in their reassembly at the end of mitosis. Regulates the centrosomal levels of kinase AURKA/Aurora A during mitotic progression by promoting AURKA removal from centrosomes in prophase. Also, regulates spindle orientation during mitosis. The sequence is that of UBX domain-containing protein 2B (UBXN2B) from Gallus gallus (Chicken).